The following is a 198-amino-acid chain: Sensory transduction protein RegX3 (198 aa).

Positions methionine 1–leucine 87 constitute a Response regulatory domain. The residue at position 23 (aspartate 23) is a 4-aspartylphosphate. Residues aspartate 99–serine 198 constitute a DNA-binding region (ompR/PhoB-type).

Post-translationally, phosphorylated by SenX3.

In terms of biological role, member of the two-component regulatory system SenX3/RegX3. This Mycobacterium leprae (strain TN) protein is Sensory transduction protein RegX3 (rgx3).